We begin with the raw amino-acid sequence, 312 residues long: Taste receptor type 2 member 103 (312 aa).

Topologically, residues 1–6 (MVLTIR) are extracellular. The helical transmembrane segment at 7–27 (AILWVTLITIISLEFIIGILG) threads the bilayer. Over 28 to 61 (NVFIALVNIIDWVKRGKISAVDKTYMALAISRTA) the chain is Cytoplasmic. Residues 62-82 (FLLSLITGFLVSLLDPALLGM) form a helical membrane-spanning segment. Residues 83-92 (RTMVRLLTIS) lie on the Extracellular side of the membrane. The chain crosses the membrane as a helical span at residues 93-113 (WMVTNHFSVWFATCLSIFYFL). The Cytoplasmic segment spans residues 114–132 (KIANFSNSIFLVLKWEAKK). A helical membrane pass occupies residues 133-153 (VVSVTLVVSVIILIMNIIVIN). At 154–185 (KFTDRLQVNTLQNCSTSNTLKDYGLFLFISTG) the chain is on the extracellular side. Asn-166 is a glycosylation site (N-linked (GlcNAc...) asparagine). A helical transmembrane segment spans residues 186–206 (FTLTPFAVSLTMFLLLIFSLW). Over 207–229 (RHLKNMCHSATGSRDVSTVAHIK) the chain is Cytoplasmic. Residues 230–250 (GLQTVVTFLLLYTAFVMSLLS) traverse the membrane as a helical segment. Residues 251–264 (ESLNINIQHTNLLS) are Extracellular-facing. A helical transmembrane segment spans residues 265-285 (HFLRSIGVAFPTGHSCVLILG). Topologically, residues 286 to 312 (NSKLRQASLSVILWLRYKYKHIENWGP) are cytoplasmic.

Belongs to the G-protein coupled receptor T2R family. As to expression, expressed in subsets of taste receptor cells of the tongue and palate epithelium and exclusively in gustducin-positive cells. Expressed in 15% taste bud cells in circumvallate and foliate papillae but only in 2% in fungiform papillae.

The protein resides in the membrane. Functionally, gustducin-coupled receptor implicated in the perception of bitter compounds in the oral cavity and the gastrointestinal tract. Signals through PLCB2 and the calcium-regulated cation channel TRPM5. This Mus musculus (Mouse) protein is Taste receptor type 2 member 103 (Tas2r103).